A 620-amino-acid polypeptide reads, in one-letter code: Chaperone protein DnaK (620 aa).

T174 bears the Phosphothreonine; by autocatalysis mark. A disordered region spans residues 590 to 620 (AAGAGPDMSGAGPQGDTYAGDDVVDGDYREV).

It belongs to the heat shock protein 70 family.

In terms of biological role, acts as a chaperone. This Lachnoclostridium phytofermentans (strain ATCC 700394 / DSM 18823 / ISDg) (Clostridium phytofermentans) protein is Chaperone protein DnaK.